The sequence spans 245 residues: 1-(5-phosphoribosyl)-5-[(5-phosphoribosylamino)methylideneamino] imidazole-4-carboxamide isomerase (245 aa).

Residue aspartate 7 is the Proton acceptor of the active site. Catalysis depends on aspartate 129, which acts as the Proton donor.

Belongs to the HisA/HisF family.

Its subcellular location is the cytoplasm. The catalysed reaction is 1-(5-phospho-beta-D-ribosyl)-5-[(5-phospho-beta-D-ribosylamino)methylideneamino]imidazole-4-carboxamide = 5-[(5-phospho-1-deoxy-D-ribulos-1-ylimino)methylamino]-1-(5-phospho-beta-D-ribosyl)imidazole-4-carboxamide. The protein operates within amino-acid biosynthesis; L-histidine biosynthesis; L-histidine from 5-phospho-alpha-D-ribose 1-diphosphate: step 4/9. The protein is 1-(5-phosphoribosyl)-5-[(5-phosphoribosylamino)methylideneamino] imidazole-4-carboxamide isomerase of Aliivibrio salmonicida (strain LFI1238) (Vibrio salmonicida (strain LFI1238)).